The sequence spans 158 residues: Glycine/sarcosine/betaine reductase complex component A1 (158 aa).

The active site involves U44. A non-standard amino acid (selenocysteine) is located at residue U44.

It belongs to the GrdA family. In terms of assembly, monomer. Component of the glycine, sarcosine and betaine reductase complexes, together with components B and C.

It catalyses the reaction acetyl phosphate + [thioredoxin]-disulfide + NH4(+) + H2O = [thioredoxin]-dithiol + glycine + phosphate + H(+). The catalysed reaction is acetyl phosphate + methylamine + [thioredoxin]-disulfide + H2O = sarcosine + [thioredoxin]-dithiol + phosphate + H(+). The enzyme catalyses acetyl phosphate + trimethylamine + [thioredoxin]-disulfide + H2O = glycine betaine + [thioredoxin]-dithiol + phosphate + H(+). Its function is as follows. In the first step of glycine, betaine and sarcosine reductases, the substrate is bound to component PB via a Schiff base intermediate. Then the PB-activated substrate is nucleophilically attacked by the selenol anion of component PA to transform it to a carboxymethylated selenoether and the respective amine. By action of component PC, acetyl phosphate is formed, leaving component PA in its oxidized state. Finally component PA becomes reduced by the thioredoxin system to start a new catalytic cycle of reductive deamination. In Peptoclostridium acidaminophilum (Eubacterium acidaminophilum), this protein is Glycine/sarcosine/betaine reductase complex component A1 (grdA1).